Reading from the N-terminus, the 297-residue chain is Homoserine kinase (297 aa).

79–89 is an ATP binding site; the sequence is PIARGLGSSGA.

This sequence belongs to the GHMP kinase family. Homoserine kinase subfamily.

It localises to the cytoplasm. The catalysed reaction is L-homoserine + ATP = O-phospho-L-homoserine + ADP + H(+). It functions in the pathway amino-acid biosynthesis; L-threonine biosynthesis; L-threonine from L-aspartate: step 4/5. In terms of biological role, catalyzes the ATP-dependent phosphorylation of L-homoserine to L-homoserine phosphate. This Pyrobaculum neutrophilum (strain DSM 2338 / JCM 9278 / NBRC 100436 / V24Sta) (Thermoproteus neutrophilus) protein is Homoserine kinase.